The sequence spans 128 residues: Glycine cleavage system H protein (128 aa).

The Lipoyl-binding domain occupies 22-104 (AIVVGITDFA…YEEGWMITIE (83 aa)). Lysine 63 is subject to N6-lipoyllysine.

This sequence belongs to the GcvH family. As to quaternary structure, the glycine cleavage system is composed of four proteins: P, T, L and H. Requires (R)-lipoate as cofactor.

Functionally, the glycine cleavage system catalyzes the degradation of glycine. The H protein shuttles the methylamine group of glycine from the P protein to the T protein. In Anaeromyxobacter dehalogenans (strain 2CP-1 / ATCC BAA-258), this protein is Glycine cleavage system H protein.